The following is a 205-amino-acid chain: Probable inactive peroxygenase-like protein (205 aa).

The Proline-knot signature appears at 79–88 (PVQLFGYILP). Serine 183 carries the phosphoserine modification.

Belongs to the caleosin family.

The protein localises to the lipid droplet. The chain is Probable inactive peroxygenase-like protein from Arabidopsis thaliana (Mouse-ear cress).